A 423-amino-acid chain; its full sequence is Cyclin-B2-1 (423 aa).

Positions 1–61 (MDRASENRRL…EKSGKEEQKP (61 aa)) are disordered. The span at 49–60 (PMLEKSGKEEQK) shows a compositional bias: basic and acidic residues.

The protein belongs to the cyclin family. Cyclin AB subfamily. As to quaternary structure, interacts with CDKB2-1. In terms of tissue distribution, expressed in the intercalary meristem and the elongation zone of internodes. Expressed in adventitious roots at all nodes under submergence conditions.

Involved in the control of the cell cycle at the G2/M (mitosis) transition. May activate CDKB2-1 kinase. The protein is Cyclin-B2-1 (CYCB2-1) of Oryza sativa subsp. indica (Rice).